The chain runs to 317 residues: Probable deoxyhypusine synthase (317 aa).

The Nucleophile role is filled by K285.

This sequence belongs to the deoxyhypusine synthase family. NAD(+) is required as a cofactor.

The enzyme catalyses [eIF5A protein]-L-lysine + spermidine = [eIF5A protein]-deoxyhypusine + propane-1,3-diamine. It functions in the pathway protein modification; eIF5A hypusination. Its function is as follows. Catalyzes the NAD-dependent oxidative cleavage of spermidine and the subsequent transfer of the butylamine moiety of spermidine to the epsilon-amino group of a specific lysine residue of the eIF-5A precursor protein to form the intermediate deoxyhypusine residue. This chain is Probable deoxyhypusine synthase (dys), found in Methanosarcina thermophila.